A 116-amino-acid polypeptide reads, in one-letter code: Large ribosomal subunit protein bL19 (116 aa).

This sequence belongs to the bacterial ribosomal protein bL19 family.

Functionally, this protein is located at the 30S-50S ribosomal subunit interface and may play a role in the structure and function of the aminoacyl-tRNA binding site. The chain is Large ribosomal subunit protein bL19 from Pseudomonas putida (strain W619).